Here is a 432-residue protein sequence, read N- to C-terminus: UDP-N-acetylglucosamine 1-carboxyvinyltransferase (432 aa).

Residue 22-23 (KN) participates in phosphoenolpyruvate binding. Arginine 101 provides a ligand contact to UDP-N-acetyl-alpha-D-glucosamine. Cysteine 125 functions as the Proton donor in the catalytic mechanism. Cysteine 125 is subject to 2-(S-cysteinyl)pyruvic acid O-phosphothioketal. UDP-N-acetyl-alpha-D-glucosamine is bound by residues 130–134 (RPVDL), aspartate 315, and isoleucine 337.

This sequence belongs to the EPSP synthase family. MurA subfamily.

It localises to the cytoplasm. The catalysed reaction is phosphoenolpyruvate + UDP-N-acetyl-alpha-D-glucosamine = UDP-N-acetyl-3-O-(1-carboxyvinyl)-alpha-D-glucosamine + phosphate. It functions in the pathway cell wall biogenesis; peptidoglycan biosynthesis. Cell wall formation. Adds enolpyruvyl to UDP-N-acetylglucosamine. This is UDP-N-acetylglucosamine 1-carboxyvinyltransferase from Paramagnetospirillum magneticum (strain ATCC 700264 / AMB-1) (Magnetospirillum magneticum).